Reading from the N-terminus, the 379-residue chain is Chaperone protein DnaJ (379 aa).

A J domain is found at 5–70; sequence DYYEILGLDK…QKKAQYDQFG (66 aa). The segment at 135–217 adopts a CR-type zinc-finger fold; sequence GVEKEISVTR…CRGKGIVRKH (83 aa). Zn(2+) contacts are provided by Cys-148, Cys-151, Cys-165, Cys-168, Cys-191, Cys-194, Cys-205, and Cys-208. CXXCXGXG motif repeat units follow at residues 148–155, 165–172, 191–198, and 205–212; these read CETCNGTG, CDKCNGTG, CDKCGGRG, and CEECRGKG.

The protein belongs to the DnaJ family. Homodimer. Zn(2+) serves as cofactor.

The protein localises to the cytoplasm. In terms of biological role, participates actively in the response to hyperosmotic and heat shock by preventing the aggregation of stress-denatured proteins and by disaggregating proteins, also in an autonomous, DnaK-independent fashion. Unfolded proteins bind initially to DnaJ; upon interaction with the DnaJ-bound protein, DnaK hydrolyzes its bound ATP, resulting in the formation of a stable complex. GrpE releases ADP from DnaK; ATP binding to DnaK triggers the release of the substrate protein, thus completing the reaction cycle. Several rounds of ATP-dependent interactions between DnaJ, DnaK and GrpE are required for fully efficient folding. Also involved, together with DnaK and GrpE, in the DNA replication of plasmids through activation of initiation proteins. In Clostridium kluyveri (strain ATCC 8527 / DSM 555 / NBRC 12016 / NCIMB 10680 / K1), this protein is Chaperone protein DnaJ.